The following is a 378-amino-acid chain: MDLVALLKSHFLCHLIFCYVFIVSGLIINTIQLCTLLLWPVNKQLFRKINCRLSYCVSSQLVMLLEWWSGTECVIYTDPRAYPKYGKENAIVVLNHKFEIDFLCGWSLAERFGVLGGSKVLAKKELAYVPIIGWMWYFTEMVFCTRKWEQDRKTVSESLLHLRDYPEKYFFLIHCEGTRFTEKKHQISMQVAQAKGLPSLKHHLLPRTKGFAVTVRSLRNVVSAVYDCTLNFRNNENPTLLGVLNGKKYHADLYVRRIPLEEVPEEEDKCAAWLHKLYQEKDAFQEEYSRTGTFPETPVVPPRRPWTLVNWLFWASMLLYPFFRFVINMVSSGSSLTLASFVLVFFVASMGVRWMIGVTEIDKGSAYGNMDSKQKHSD.

The chain crosses the membrane as a helical span at residues 11–31 (FLCHLIFCYVFIVSGLIINTI). Residues 96-101 (HKFEID) carry the HXXXXD motif motif. 3 helical membrane-spanning segments follow: residues 125 to 145 (ELAY…VFCT), 307 to 327 (TLVN…RFVI), and 338 to 358 (LASF…MIGV).

It belongs to the 1-acyl-sn-glycerol-3-phosphate acyltransferase family.

It localises to the endoplasmic reticulum membrane. It catalyses the reaction a 1-acyl-sn-glycero-3-phosphate + an acyl-CoA = a 1,2-diacyl-sn-glycero-3-phosphate + CoA. It carries out the reaction (4Z,7Z,10Z,13Z,16Z,19Z)-docosahexaenoyl-CoA + 1-hexadecanoyl-sn-glycero-3-phosphate = 1-hexadecanoyl-2-(4Z,7Z,10Z,13Z,16Z,19Z-docosahexaenoyl)-sn-glycero-3-phosphate + CoA. The enzyme catalyses 1-octadecanoyl-sn-glycero-3-phosphate + (9Z,12Z)-octadecadienoyl-CoA = 1-octadecanoyl-2-(9Z,12Z-octadecadienoyl)-sn-glycero-3-phosphate + CoA. The catalysed reaction is 1-octadecanoyl-sn-glycero-3-phosphate + (4Z,7Z,10Z,13Z,16Z,19Z)-docosahexaenoyl-CoA = 1-octadecanoyl-2-(4Z,7Z,10Z,13Z,16Z,19Z-docosahexaenoyl)-sn-glycero-3-phosphate + CoA. It catalyses the reaction (4Z,7Z,10Z,13Z,16Z,19Z)-docosahexaenoyl-CoA + 1-(9Z-octadecenoyl)-sn-glycero-3-phosphate = 1-(9Z-octadecenoyl)-2-(4Z,7Z,10Z,13Z,16Z,19Z-docosahexaenoyl)-sn-glycero-3-phosphate + CoA. It functions in the pathway phospholipid metabolism; CDP-diacylglycerol biosynthesis; CDP-diacylglycerol from sn-glycerol 3-phosphate: step 2/3. Its function is as follows. Converts 1-acyl-sn-glycerol-3-phosphate (lysophosphatidic acid or LPA) into 1,2-diacyl-sn-glycerol-3-phosphate (phosphatidic acid or PA) by incorporating an acyl moiety at the sn-2 position of the glycerol backbone. Exhibits high acyl-CoA specificity for polyunsaturated fatty acyl-CoA, especially docosahexaenoyl-CoA (22:6-CoA, DHA-CoA). The chain is 1-acyl-sn-glycerol-3-phosphate acyltransferase delta (AGPAT4) from Bos taurus (Bovine).